A 251-amino-acid chain; its full sequence is Phosphate import ATP-binding protein PstB (251 aa).

Positions Ile5–Ile246 constitute an ABC transporter domain. Gly37–Ser44 provides a ligand contact to ATP.

It belongs to the ABC transporter superfamily. Phosphate importer (TC 3.A.1.7) family. As to quaternary structure, the complex is composed of two ATP-binding proteins (PstB), two transmembrane proteins (PstC and PstA) and a solute-binding protein (PstS).

It localises to the cell membrane. The catalysed reaction is phosphate(out) + ATP + H2O = ADP + 2 phosphate(in) + H(+). Functionally, part of the ABC transporter complex PstSACB involved in phosphate import. Responsible for energy coupling to the transport system. The sequence is that of Phosphate import ATP-binding protein PstB from Dehalococcoides mccartyi (strain ATCC BAA-2266 / KCTC 15142 / 195) (Dehalococcoides ethenogenes (strain 195)).